Here is a 189-residue protein sequence, read N- to C-terminus: Glutathione-dependent formaldehyde-activating enzyme (189 aa).

The 147-residue stretch at 20–166 (FAGGTLVCAC…LRTIGLEPYD (147 aa)) folds into the CENP-V/GFA domain. Cys-27, Cys-29, Cys-48, Cys-50, Cys-53, Cys-95, and Cys-98 together coordinate Zn(2+).

This sequence belongs to the Gfa family. Zn(2+) is required as a cofactor.

The enzyme catalyses S-(hydroxymethyl)glutathione = glutathione + formaldehyde. It functions in the pathway one-carbon metabolism; formaldehyde degradation; formate from formaldehyde (glutathione route): step 1/3. Its function is as follows. Catalyzes the condensation of formaldehyde and glutathione to S-hydroxymethylglutathione. The polypeptide is Glutathione-dependent formaldehyde-activating enzyme (Mesorhizobium japonicum (strain LMG 29417 / CECT 9101 / MAFF 303099) (Mesorhizobium loti (strain MAFF 303099))).